A 294-amino-acid chain; its full sequence is MSISASMVKTLRERTGAGMMDCKQALEEANGDMEKAIDWLRQRGLSKASKKAGRATTEGLIGCQVLPGSTSAVLVEVMCETDFVSRDEVFKKFVDDIVSQLVANFHNNDVDLLDQPSGNKNLSIRDLLNETIATIGENIVIGRSIKMELTPGKNGMIGHYVHTNGKIAVLVELATETKETASSPKFQELAKNIAMQIAATAPLALNSESLDPLKIDREREVYRQKALEEGKPENMIEKIVEGAVKKYLKEVCLLDQPYIRDDKLSIAELIKKVSNEIGEPISIIEFVRIQLGEE.

Positions 81–84 (TDFV) are involved in Mg(2+) ion dislocation from EF-Tu.

This sequence belongs to the EF-Ts family.

The protein resides in the cytoplasm. In terms of biological role, associates with the EF-Tu.GDP complex and induces the exchange of GDP to GTP. It remains bound to the aminoacyl-tRNA.EF-Tu.GTP complex up to the GTP hydrolysis stage on the ribosome. This Lawsonia intracellularis (strain PHE/MN1-00) protein is Elongation factor Ts.